The chain runs to 658 residues: Protein teflon (658 aa).

The C2H2-type 1 zinc finger occupies 33–56 (LYCHFCRDLFTQLPEFLRHLQGAH). 2 disordered regions span residues 78–127 (EQDD…SEQK) and 151–175 (HINN…SESN). Residues 100–111 (IPAKSEDSRAID) show a composition bias toward basic and acidic residues. Over residues 118-127 (DNSPVKSEQK) the composition is skewed to polar residues. The C2H2-type 2; degenerate zinc-finger motif lies at 608–630 (YFCKCCDDIFTLNEDYTRHLVSQ). A C2H2-type 3 zinc finger spans residues 634–657 (YQCTKCIKAFKYRGHFEKHLQNVH).

Belongs to the Teflon family.

Its subcellular location is the nucleus. The protein resides in the chromosome. Its function is as follows. Specifically required in males for proper segregation of autosomal bivalents at meiosis I. Expression is required in the male germ line prior to spermatocyte stage S4. May have a role as a bridging molecule maintaining adhesion to hold autosome bivalents together via heterochromatic connections. The polypeptide is Protein teflon (Drosophila erecta (Fruit fly)).